The primary structure comprises 426 residues: MALNAPSGSCSSKVLLHPLVIMQMSEHYSRTKVQQGPTVKKVFGAILGRQNGRQVEAINSFVLKMETEEMAEPVTFSTEHLLQRADQYLEVFPELQVIGLYCAGEDDNLTPEEKPLLSKLTNAVRNSEKAGQIDATLFLKLNSITAGTTRKLPLFAFEADVTDQEKHKPIEWILVSEESERVGVNHIAKLSTKHGKDGKSVGKKHAEAQDAAMSMLQNRVDLIVAYLEKVQDGTLQPNFEILKEANLLAQKLKTIDRYAAEFTDSFEKEEKTMTVFSLMPRLTTLLGNMQNVWNKLSAQRADLLADDGFHGKSTSRWAHPVRFKSQHLGRPQQADDDDYFDDEDLENDMSGPRRKIHAADSPAGSRRRRVPPRAMNFLGRNSGMQAATDEMELSGQEENMGSNYIPDVPRPSATAHNESDESSQAS.

In terms of domain architecture, MPN spans 14-155; it reads VLLHPLVIMQ…AGTTRKLPLF (142 aa). Residues 320–426 form a disordered region; the sequence is PVRFKSQHLG…NESDESSQAS (107 aa). The span at 334-347 shows a compositional bias: acidic residues; sequence ADDDDYFDDEDLEN.

Belongs to the peptidase M67A family. CSN6 subfamily. Component of the CSN complex, probably composed of csn-1, csn-2, csn-3, csn-4, csn-5, csn-6 and csn-7. Within the complex it probably interacts directly with csn-2 and csn-4. Interacts with rbx-1.

The protein resides in the cytoplasm. The protein localises to the nucleus. Its function is as follows. Component of the COP9 signalosome complex (CSN), a complex involved in various cellular and developmental processes. The CSN complex is an essential regulator of the ubiquitin (Ubl) conjugation pathway by mediating the deneddylation of the cullin subunits of the SCF-type E3 ligase complexes, leading to decrease the Ubl ligase activity of SCF. The CSN complex plays an essential role in embryogenesis and oogenesis and is required to regulate microtubule stability in the early embryo. Mediates mei-3/katanin targeting for degradation at the meiosis to mitosis transition via deneddylation of cul-3. This Caenorhabditis elegans protein is COP9 signalosome complex subunit 6 (csn-6).